The chain runs to 118 residues: Small ribosomal subunit protein uS13 (118 aa).

A disordered region spans residues 94–118; it reads GLPVRGQRTKTNARTRKGPRKPIKK.

This sequence belongs to the universal ribosomal protein uS13 family. As to quaternary structure, part of the 30S ribosomal subunit. Forms a loose heterodimer with protein S19. Forms two bridges to the 50S subunit in the 70S ribosome.

Functionally, located at the top of the head of the 30S subunit, it contacts several helices of the 16S rRNA. In the 70S ribosome it contacts the 23S rRNA (bridge B1a) and protein L5 of the 50S subunit (bridge B1b), connecting the 2 subunits; these bridges are implicated in subunit movement. Contacts the tRNAs in the A and P-sites. The chain is Small ribosomal subunit protein uS13 from Pasteurella multocida (strain Pm70).